A 299-amino-acid polypeptide reads, in one-letter code: Putative activator of 90 kDa heat shock protein ATPase homolog 2 (299 aa).

It belongs to the AHA1 family.

Co-chaperone that stimulates HSP90 ATPase activity. The polypeptide is Putative activator of 90 kDa heat shock protein ATPase homolog 2 (Homo sapiens (Human)).